The sequence spans 135 residues: MADNFNFEFVSPERLLISEKVSEVVIPATEGEMTVMAHHAPTMTVIKPGVVTVKFASGKTGKYVIFGGFADITPERLTLLAESAVPVDELSRDTLMKRIELAKAELDDTENHEHRTKLEQFLNAMTHLNGVLVPA.

This sequence belongs to the ATPase epsilon chain family. As to quaternary structure, F-type ATPases have 2 components, CF(1) - the catalytic core - and CF(0) - the membrane proton channel. CF(1) has five subunits: alpha(3), beta(3), gamma(1), delta(1), epsilon(1). CF(0) has three main subunits: a, b and c.

It is found in the cell inner membrane. Its function is as follows. Produces ATP from ADP in the presence of a proton gradient across the membrane. In Allorhizobium ampelinum (strain ATCC BAA-846 / DSM 112012 / S4) (Agrobacterium vitis (strain S4)), this protein is ATP synthase epsilon chain.